Reading from the N-terminus, the 198-residue chain is Ribonuclease HII (198 aa).

Residues 10–198 enclose the RNase H type-2 domain; that stretch reads QLVAGVDEVG…PVKRALGLAS (189 aa). A divalent metal cation contacts are provided by Asp-16, Glu-17, and Asp-108.

Belongs to the RNase HII family. Mn(2+) is required as a cofactor. Requires Mg(2+) as cofactor.

Its subcellular location is the cytoplasm. The enzyme catalyses Endonucleolytic cleavage to 5'-phosphomonoester.. Its function is as follows. Endonuclease that specifically degrades the RNA of RNA-DNA hybrids. This Escherichia coli O6:H1 (strain CFT073 / ATCC 700928 / UPEC) protein is Ribonuclease HII.